A 136-amino-acid chain; its full sequence is uncharacterized protein (136 aa).

Residues 40–62 (LFYSISLCVSLLLHISLCVSVYV) traverse the membrane as a helical segment.

The protein resides in the membrane. This is an uncharacterized protein from Homo sapiens (Human).